The sequence spans 450 residues: Saccharopine dehydrogenase [NADP(+), L-glutamate-forming] (450 aa).

NADP(+)-binding positions include 11 to 14 (SGFV), 33 to 35 (CRT), 55 to 56 (DV), Ile76, 98 to 99 (TS), 125 to 127 (LDP), and Ser175. L-saccharopine contacts are provided by residues 99–100 (SY) and Asp126. L-saccharopine is bound by residues Arg224 and 245 to 247 (TLR).

The protein belongs to the saccharopine dehydrogenase family. Homodimer.

The catalysed reaction is L-saccharopine + NADP(+) + H2O = (S)-2-amino-6-oxohexanoate + L-glutamate + NADPH + H(+). It participates in amino-acid biosynthesis; L-lysine biosynthesis via AAA pathway; L-lysine from L-alpha-aminoadipate (fungal route): step 2/3. The polypeptide is Saccharopine dehydrogenase [NADP(+), L-glutamate-forming] (LYS3) (Pyricularia oryzae (strain 70-15 / ATCC MYA-4617 / FGSC 8958) (Rice blast fungus)).